A 257-amino-acid polypeptide reads, in one-letter code: ABC transporter ATP-binding protein YxdL (257 aa).

The 239-residue stretch at 5-243 folds into the ABC transporter domain; sequence LEVKHINKTY…FYEQILDVLS (239 aa). 40 to 47 is an ATP binding site; it reads GPSGSGKT.

The protein belongs to the ABC transporter superfamily. In terms of assembly, the complex is composed of two ATP-binding proteins (YxdL) and two transmembrane proteins (YxdM).

In terms of biological role, part of the ABC transporter complex YxdLM which could be involved in peptide resistance. Responsible for energy coupling to the transport system. This Bacillus subtilis (strain 168) protein is ABC transporter ATP-binding protein YxdL (yxdL).